A 554-amino-acid chain; its full sequence is Arginine--tRNA ligase (554 aa).

Positions 130–140 match the 'HIGH' region motif; the sequence is ANPTGDLHIGH.

Belongs to the class-I aminoacyl-tRNA synthetase family. As to quaternary structure, monomer.

The protein localises to the cytoplasm. It catalyses the reaction tRNA(Arg) + L-arginine + ATP = L-arginyl-tRNA(Arg) + AMP + diphosphate. The protein is Arginine--tRNA ligase of Staphylococcus carnosus (strain TM300).